Consider the following 231-residue polypeptide: MSKLITTEPLKSMAEVISNYAMKQQSVSERNIPKKQSLLRKEITYETEVQTSADSIWNVYSSPDIPRLLRDVLLPGVFEKLDVIAGNGGVGTVLDIAFPLGAVPRRYKEKFVKINHEKRLKEVVMIEGGYLDMGCTFYMDRIHIFEKTPNSCVIESSIIYEVKEEYAGKMAKLITTEPLESMAEVISGYVLKKRLQVFGFEIKPKLRFNLLLCLIICLVIAGGMFVAGVPL.

107 to 109 serves as a coordination point for dopamine; it reads YKE. The Proton donor role is filled by K121. D140 lines the (4-hydroxyphenyl)acetaldehyde pocket. The helical transmembrane segment at 210–230 threads the bilayer; sequence LLLCLIICLVIAGGMFVAGVP.

The protein belongs to the BetVI family. In terms of tissue distribution, detected in roots, stems, leaves, flower buds and germinating seeds.

The protein localises to the membrane. The enzyme catalyses (4-hydroxyphenyl)acetaldehyde + dopamine = (S)-norcoclaurine + H2O. It functions in the pathway alkaloid biosynthesis; (S)-reticuline biosynthesis. With respect to regulation, activity doubles within 5 hours of elicitor treatment and continues to increase for at least 80 hours. Functionally, involved in the biosynthesis of (S)-coclaurine, the common precursor of all benzylisoquinoline alkaloids such as morphine, sanguinarine, codeine or papaverine. Condenses dopamine and 4-hydroxyphenylacetaldehyde. The polypeptide is S-norcoclaurine synthase 1 (Papaver somniferum (Opium poppy)).